Consider the following 416-residue polypeptide: Probable sarcosine oxidase (416 aa).

Residue 10–40 (DVIVVGAGVMGSSAAYQLAKRGQKTLLLEQF) coordinates FAD. C325 bears the S-8alpha-FAD cysteine mark.

Belongs to the MSOX/MTOX family. The cofactor is FAD.

It carries out the reaction sarcosine + O2 + H2O = formaldehyde + glycine + H2O2. The polypeptide is Probable sarcosine oxidase (Arabidopsis thaliana (Mouse-ear cress)).